We begin with the raw amino-acid sequence, 339 residues long: WAT1-related protein At5g40210 (339 aa).

A run of 10 helical transmembrane segments spans residues 11–31 (GWILTAMVVTEFSNVGVNTLV), 42–62 (FVVLVYSYTFGSLLLLPLTFF), 74–94 (FSILCNMGILGLIASAFQILG), 104–124 (TLSSAMSNVNPAFTFILAVVF), 140–160 (VLGTILSIIGALVVTLYHGPM), 168–188 (WIIGGGLLALQYILVSVSYLV), 200–220 (VVVTLVHNVCIAVVCAFVSLL), 233–253 (FDITLITVVATGILNSGYYVI), 266–286 (LSMFKPLSILIAAVSTFIFLG), and 289–309 (LYLGSVMGGILISIGFYMVLW). In terms of domain architecture, EamA spans 29–154 (TLVKAATSKG…LSIIGALVVT (126 aa)).

The protein belongs to the drug/metabolite transporter (DMT) superfamily. Plant drug/metabolite exporter (P-DME) (TC 2.A.7.4) family.

Its subcellular location is the membrane. The chain is WAT1-related protein At5g40210 from Arabidopsis thaliana (Mouse-ear cress).